Consider the following 292-residue polypeptide: MFTGSIVALVTPMDDKGNVCRASLKKLIDYHVASGTSAIVSVGTTGESATLSHDEHGDVVLLTLELADGRIPIIAGTGANATAEGVCLTKRFENSGVVGCLTVTPYYNRPTQEGLYQHFKTIAENTELPQMLYNVPSRTGTDLLPETVGRLAKIKNIIGIKEAIGNLSRVSQIQQLVNDDFVLVSGDDATSLDFMQLGGHGVISVTANIAAREMVELCALARQGNFAQARLLNQRLMHLHQKLFVEPNPIPVKWAAKRLGLIATDTLRLPMTPLTDAGCSVVEQALKDAALL.

T45 contributes to the pyruvate binding site. The active-site Proton donor/acceptor is Y133. K161 serves as the catalytic Schiff-base intermediate with substrate. A pyruvate-binding site is contributed by I203.

It belongs to the DapA family. Homotetramer; dimer of dimers.

Its subcellular location is the cytoplasm. It catalyses the reaction L-aspartate 4-semialdehyde + pyruvate = (2S,4S)-4-hydroxy-2,3,4,5-tetrahydrodipicolinate + H2O + H(+). It functions in the pathway amino-acid biosynthesis; L-lysine biosynthesis via DAP pathway; (S)-tetrahydrodipicolinate from L-aspartate: step 3/4. Catalyzes the condensation of (S)-aspartate-beta-semialdehyde [(S)-ASA] and pyruvate to 4-hydroxy-tetrahydrodipicolinate (HTPA). The sequence is that of 4-hydroxy-tetrahydrodipicolinate synthase from Erwinia tasmaniensis (strain DSM 17950 / CFBP 7177 / CIP 109463 / NCPPB 4357 / Et1/99).